We begin with the raw amino-acid sequence, 260 residues long: Thiazole synthase (260 aa).

Residue Lys102 is the Schiff-base intermediate with DXP of the active site. 1-deoxy-D-xylulose 5-phosphate is bound by residues Gly163, 189-190 (AG), and 211-212 (NT).

Belongs to the ThiG family. Homotetramer. Forms heterodimers with either ThiH or ThiS.

The protein resides in the cytoplasm. It carries out the reaction [ThiS sulfur-carrier protein]-C-terminal-Gly-aminoethanethioate + 2-iminoacetate + 1-deoxy-D-xylulose 5-phosphate = [ThiS sulfur-carrier protein]-C-terminal Gly-Gly + 2-[(2R,5Z)-2-carboxy-4-methylthiazol-5(2H)-ylidene]ethyl phosphate + 2 H2O + H(+). The protein operates within cofactor biosynthesis; thiamine diphosphate biosynthesis. Its function is as follows. Catalyzes the rearrangement of 1-deoxy-D-xylulose 5-phosphate (DXP) to produce the thiazole phosphate moiety of thiamine. Sulfur is provided by the thiocarboxylate moiety of the carrier protein ThiS. In vitro, sulfur can be provided by H(2)S. The sequence is that of Thiazole synthase from Geobacter sp. (strain M21).